We begin with the raw amino-acid sequence, 456 residues long: Esterase MT1326 (456 aa).

3 consecutive LysM domains span residues 3–50, 54–101, and 105–152; these read STHA…RLIM, TRYT…RLIM, and TRYT…VLVI. Active-site residues include Ser294, Asp391, and His425.

Belongs to the AB hydrolase superfamily.

Its subcellular location is the secreted. The protein resides in the cell wall. It carries out the reaction a fatty acid ester + H2O = an aliphatic alcohol + a fatty acid + H(+). Functionally, exhibits lipolytic activity with medium chain length esters as optimum substrates. The chain is Esterase MT1326 from Mycobacterium tuberculosis (strain CDC 1551 / Oshkosh).